Consider the following 186-residue polypeptide: Ribosome-recycling factor (186 aa).

This sequence belongs to the RRF family.

The protein localises to the cytoplasm. Its function is as follows. Responsible for the release of ribosomes from messenger RNA at the termination of protein biosynthesis. May increase the efficiency of translation by recycling ribosomes from one round of translation to another. This Burkholderia multivorans (strain ATCC 17616 / 249) protein is Ribosome-recycling factor.